A 185-amino-acid chain; its full sequence is MIHAVLIFNKKCQPRLVKYYTPVDLPKQKLLLEQVYELISQRNSSIQSSFLITPPSLLSSGSETINEDIQIIYKNYATLYFTFIVDDQESELAILDLIQTFVEALDRCFAEVNELDLIFNWQTLESVLEEIIQGGMVIETNVKKIVETVDELNRTSNQEARFGNGLGNAFQAITMGGFSNWGARQ.

It belongs to the adaptor complexes small subunit family. Adaptor protein complex 3 (AP-3) is a heterotetramer composed of 2 large adaptins (APL5 and APL6), a medium adaptin (APM3) and a small adaptin (APS3).

The protein resides in the golgi apparatus. It localises to the cytoplasmic vesicle membrane. Its function is as follows. Part of the AP-3 complex, an adaptor-related complex which is not clathrin-associated. The complex is associated with the Golgi region as well as more peripheral structures. It facilitates the budding of vesicles from the Golgi membrane and may be directly involved in trafficking to the vacuole. The polypeptide is AP-3 complex subunit sigma (APS3) (Eremothecium gossypii (strain ATCC 10895 / CBS 109.51 / FGSC 9923 / NRRL Y-1056) (Yeast)).